The sequence spans 202 residues: Outer-membrane lipoprotein carrier protein (202 aa).

The N-terminal stretch at 1–21 (MKRLLVACCFLSGLISASALA) is a signal peptide.

It belongs to the LolA family. In terms of assembly, monomer.

Its subcellular location is the periplasm. In terms of biological role, participates in the translocation of lipoproteins from the inner membrane to the outer membrane. Only forms a complex with a lipoprotein if the residue after the N-terminal Cys is not an aspartate (The Asp acts as a targeting signal to indicate that the lipoprotein should stay in the inner membrane). The chain is Outer-membrane lipoprotein carrier protein from Yersinia pestis bv. Antiqua (strain Antiqua).